We begin with the raw amino-acid sequence, 708 residues long: Vertnin (708 aa).

Disordered regions lie at residues 473–499 (PWKGEGGEGAGKATAGGPPAPHEFLPP) and 561–636 (APAL…PVAE). Over residues 568–582 (GLREAKEKQEKEAGR) the composition is skewed to basic and acidic residues.

The protein belongs to the vertnin family.

The chain is Vertnin (VRTN) from Ailuropoda melanoleuca (Giant panda).